A 127-amino-acid polypeptide reads, in one-letter code: Holo-[acyl-carrier-protein] synthase (127 aa).

2 residues coordinate Mg(2+): Asp8 and Glu59.

This sequence belongs to the P-Pant transferase superfamily. AcpS family. Mg(2+) serves as cofactor.

It localises to the cytoplasm. The catalysed reaction is apo-[ACP] + CoA = holo-[ACP] + adenosine 3',5'-bisphosphate + H(+). Transfers the 4'-phosphopantetheine moiety from coenzyme A to a Ser of acyl-carrier-protein. This is Holo-[acyl-carrier-protein] synthase from Rickettsia bellii (strain OSU 85-389).